The following is a 140-amino-acid chain: Chromatin accessibility complex 16kD protein (140 aa).

The tract at residues 111–140 (LNRSAGSDDDDDDDDDDDEEESESESESDE) is disordered. Positions 117 to 140 (SDDDDDDDDDDDEEESESESESDE) are enriched in acidic residues.

Component of the chromatin accessibility complex (CHRAC), composed of Chrac-14, Chrac-16, Acf and Iswi. Forms a heterodimer with Chrac-14. The Chrac-14/Chrac-16 heterodimer interacts with Acf (via N-terminus). Stabilizes the interaction between Chrac-14 and Iswi.

Its subcellular location is the nucleus. Functionally, histone-like protein which promotes nucleosome sliding of ATP-dependent nucleosome remodeling complexes. Part of the chromatin-accessibility complex (CHRAC) which uses energy/ATP to increase the general accessibility of DNA in chromatin. As a heterodimer with Chrac-14, binds DNA and facilitates nucleosome sliding by Acf. As part of the CHRAC complex, required for oogenesis. The polypeptide is Chromatin accessibility complex 16kD protein (Drosophila melanogaster (Fruit fly)).